The sequence spans 510 residues: Amidophosphoribosyltransferase (510 aa).

The Nucleophile role is filled by cysteine 2. A Glutamine amidotransferase type-2 domain is found at cysteine 2–asparagine 239. Aspartate 373 and aspartate 374 together coordinate Mg(2+).

The protein in the C-terminal section; belongs to the purine/pyrimidine phosphoribosyltransferase family. Mg(2+) serves as cofactor.

It catalyses the reaction 5-phospho-beta-D-ribosylamine + L-glutamate + diphosphate = 5-phospho-alpha-D-ribose 1-diphosphate + L-glutamine + H2O. It participates in purine metabolism; IMP biosynthesis via de novo pathway; N(1)-(5-phospho-D-ribosyl)glycinamide from 5-phospho-alpha-D-ribose 1-diphosphate: step 1/2. The polypeptide is Amidophosphoribosyltransferase (ADE4) (Saccharomyces cerevisiae (strain ATCC 204508 / S288c) (Baker's yeast)).